Reading from the N-terminus, the 107-residue chain is YcgL domain-containing protein Psyc_0800 (107 aa).

The region spanning 1 to 95 is the YcgL domain; sequence MHCDIYKFLK…QDVMRRQAEL (95 aa).

This is YcgL domain-containing protein Psyc_0800 from Psychrobacter arcticus (strain DSM 17307 / VKM B-2377 / 273-4).